A 236-amino-acid polypeptide reads, in one-letter code: Methylosome subunit pICln (236 aa).

Ser2 carries the N-acetylserine modification. The tract at residues 88 to 109 is disordered; the sequence is EESKEPPSDEDEEDNDDIEPIS. Residues Ser95, Ser143, Ser192, Ser194, Ser197, and Ser209 each carry the phosphoserine modification. Over residues 95 to 107 the composition is skewed to acidic residues; the sequence is SDEDEEDNDDIEP. At Thr222 the chain carries Phosphothreonine.

Belongs to the pICln (TC 1.A.47) family. As to quaternary structure, component of the methylosome, a 20S complex containing at least PRMT5/SKB1, WDR77/MEP50 and CLNS1A/pICln. May mediate SNRPD1 and SNRPD3 methylation. Forms a 6S pICln-Sm complex composed of CLNS1A/pICln, SNRPD1, SNRPD2, SNRPE, SNRPF and SNRPG; ring-like structure where CLNS1A/pICln mimics additional Sm proteins and which is unable to assemble into the core snRNP. Interacts with LSM10 and LSM11.

The protein localises to the cytoplasm. It is found in the cytosol. Its subcellular location is the nucleus. It localises to the cytoskeleton. Involved in both the assembly of spliceosomal snRNPs and the methylation of Sm proteins. Chaperone that regulates the assembly of spliceosomal U1, U2, U4 and U5 small nuclear ribonucleoproteins (snRNPs), the building blocks of the spliceosome, and thereby plays an important role in the splicing of cellular pre-mRNAs. Most spliceosomal snRNPs contain a common set of Sm proteins SNRPB, SNRPD1, SNRPD2, SNRPD3, SNRPE, SNRPF and SNRPG that assemble in a heptameric protein ring on the Sm site of the small nuclear RNA to form the core snRNP (Sm core). In the cytosol, the Sm proteins SNRPD1, SNRPD2, SNRPE, SNRPF and SNRPG are trapped in an inactive 6S pICln-Sm complex by the chaperone CLNS1A that controls the assembly of the core snRNP. Dissociation by the SMN complex of CLNS1A from the trapped Sm proteins and their transfer to an SMN-Sm complex triggers the assembly of core snRNPs and their transport to the nucleus. The sequence is that of Methylosome subunit pICln (Clns1a) from Mus musculus (Mouse).